Consider the following 132-residue polypeptide: Small ribosomal subunit protein uS8 (132 aa).

It belongs to the universal ribosomal protein uS8 family. In terms of assembly, part of the 30S ribosomal subunit. Contacts proteins S5 and S12.

Its function is as follows. One of the primary rRNA binding proteins, it binds directly to 16S rRNA central domain where it helps coordinate assembly of the platform of the 30S subunit. The polypeptide is Small ribosomal subunit protein uS8 (Clostridium beijerinckii (strain ATCC 51743 / NCIMB 8052) (Clostridium acetobutylicum)).